We begin with the raw amino-acid sequence, 238 residues long: MIINAKGPASFAEKYIVRSIWDNKFPPGSILPAERELSELIGVTRTTLREVLQRLARDGWLKIQHGKPTRVNNFWETSGLNILETIADLNPEGFPVLVDQLLSARTNVSAIYFRGALRYNPDTAVDVLAKIHQLEDTAESYAEFDYLLHHTLAFSSGNPLYVLILNGFKGLYSRVGRYYFTSSDARLLALNFYKELELLAQAKNYLDVPALMRTYGMNSGKMWLQLRDDMPASIAQDN.

The HTH gntR-type domain occupies 6-74; that stretch reads KGPASFAEKY…HGKPTRVNNF (69 aa). Residues 34–53 constitute a DNA-binding region (H-T-H motif); that stretch reads ERELSELIGVTRTTLREVLQ.

As to quaternary structure, homodimer.

The protein localises to the cytoplasm. In terms of biological role, multifunctional regulator of fatty acid metabolism. The polypeptide is Fatty acid metabolism regulator protein (Shewanella baltica (strain OS185)).